Consider the following 402-residue polypeptide: Formate-dependent phosphoribosylglycinamide formyltransferase (402 aa).

N(1)-(5-phospho-beta-D-ribosyl)glycinamide contacts are provided by residues 23 to 24 (EL) and Glu-83. ATP contacts are provided by residues Arg-115, Lys-156, 196–199 (EEFV), and Glu-204. Residues 120-316 (RLAAEKVGVP…EFAIHARAVL (197 aa)) enclose the ATP-grasp domain. Residues Glu-274 and Glu-287 each coordinate Mg(2+). N(1)-(5-phospho-beta-D-ribosyl)glycinamide is bound by residues Asp-294, Lys-364, and 371–372 (RR).

Belongs to the PurK/PurT family. Homodimer.

It carries out the reaction N(1)-(5-phospho-beta-D-ribosyl)glycinamide + formate + ATP = N(2)-formyl-N(1)-(5-phospho-beta-D-ribosyl)glycinamide + ADP + phosphate + H(+). It functions in the pathway purine metabolism; IMP biosynthesis via de novo pathway; N(2)-formyl-N(1)-(5-phospho-D-ribosyl)glycinamide from N(1)-(5-phospho-D-ribosyl)glycinamide (formate route): step 1/1. Functionally, involved in the de novo purine biosynthesis. Catalyzes the transfer of formate to 5-phospho-ribosyl-glycinamide (GAR), producing 5-phospho-ribosyl-N-formylglycinamide (FGAR). Formate is provided by PurU via hydrolysis of 10-formyl-tetrahydrofolate. The polypeptide is Formate-dependent phosphoribosylglycinamide formyltransferase (Ignicoccus hospitalis (strain KIN4/I / DSM 18386 / JCM 14125)).